The chain runs to 210 residues: Glutathione S-transferase mdpJ (210 aa).

In terms of domain architecture, GST N-terminal spans 2 to 83 (SFGTLYTHNP…YCNDERSSLR (82 aa)). The GST C-terminal domain occupies 77-200 (DERSSLRILQ…VAGGVPDLGL (124 aa)).

It belongs to the GST superfamily.

It participates in secondary metabolite biosynthesis. Glutathione S-transferase; part of the gene cluster that mediates the biosynthesis of monodictyphenone, a prenyl xanthone derivative. The pathway begins with the synthesis of atrochrysone thioester by the polyketide synthase (PKS) mdpG. The atrochrysone carboxyl ACP thioesterase mdpF then breaks the thioester bond and releases the atrochrysone carboxylic acid from mdpG. The atrochrysone carboxylic acid is then converted to atrochrysone which is further transformed into emodin anthrone. The next step is performed by the anthrone oxygenase mdpH that catalyzes the oxidation of emodinanthrone to emodin. Emodin is further modified to yield monodictyphenone via several steps involving mdpB, mdpC mdpJ, mdpK and mdpL. These enzymes with xptA, xptB and xptC are also proposed to be involved in the synthesis of shamixanthone from emodin. Especially, direct reduction of emodin by the short chain dehydrogenase mdpC followed by dehydration catalyzed by the scytalone dehydratase-like protein mdpB gives loss of oxygen and formation of chrysophanol intermediate in two simple steps. The chain is Glutathione S-transferase mdpJ from Emericella nidulans (strain FGSC A4 / ATCC 38163 / CBS 112.46 / NRRL 194 / M139) (Aspergillus nidulans).